A 265-amino-acid polypeptide reads, in one-letter code: Ubiquinone biosynthesis protein COQ4 homolog, mitochondrial (265 aa).

Zn(2+)-binding residues include His162, Asp163, His166, and Glu178.

The protein belongs to the COQ4 family. Component of a multi-subunit COQ enzyme complex. It depends on Zn(2+) as a cofactor.

The protein localises to the mitochondrion inner membrane. The catalysed reaction is a 4-hydroxy-3-methoxy-5-(all-trans-polyprenyl)benzoate + H(+) = a 2-methoxy-6-(all-trans-polyprenyl)phenol + CO2. The protein operates within cofactor biosynthesis; ubiquinone biosynthesis. Its function is as follows. Lyase that catalyzes the C1-decarboxylation of 4-hydroxy-3-methoxy-5-(all-trans-polyprenyl)benzoic acid into 2-methoxy-6-(all-trans-polyprenyl)phenol during ubiquinone biosynthesis. This is Ubiquinone biosynthesis protein COQ4 homolog, mitochondrial from Drosophila willistoni (Fruit fly).